The primary structure comprises 425 residues: Adenosylhomocysteinase (425 aa).

Residues T60, D132, and E157 each contribute to the substrate site. 158–160 lines the NAD(+) pocket; the sequence is TTT. 2 residues coordinate substrate: K187 and D191. NAD(+) contacts are provided by residues N192, 221–226, E244, N279, 300–302, and N347; these read GYGWCG and SGH.

This sequence belongs to the adenosylhomocysteinase family. NAD(+) is required as a cofactor.

It localises to the cytoplasm. It catalyses the reaction S-adenosyl-L-homocysteine + H2O = L-homocysteine + adenosine. It functions in the pathway amino-acid biosynthesis; L-homocysteine biosynthesis; L-homocysteine from S-adenosyl-L-homocysteine: step 1/1. May play a key role in the regulation of the intracellular concentration of adenosylhomocysteine. This is Adenosylhomocysteinase from Nostoc sp. (strain PCC 7120 / SAG 25.82 / UTEX 2576).